The chain runs to 300 residues: 4-hydroxy-tetrahydrodipicolinate synthase (300 aa).

Thr-45 is a pyruvate binding site. The Proton donor/acceptor role is filled by Tyr-140. The Schiff-base intermediate with substrate role is filled by Lys-169. Ile-210 lines the pyruvate pocket.

This sequence belongs to the DapA family. Homotetramer; dimer of dimers.

Its subcellular location is the cytoplasm. It carries out the reaction L-aspartate 4-semialdehyde + pyruvate = (2S,4S)-4-hydroxy-2,3,4,5-tetrahydrodipicolinate + H2O + H(+). It participates in amino-acid biosynthesis; L-lysine biosynthesis via DAP pathway; (S)-tetrahydrodipicolinate from L-aspartate: step 3/4. Functionally, catalyzes the condensation of (S)-aspartate-beta-semialdehyde [(S)-ASA] and pyruvate to 4-hydroxy-tetrahydrodipicolinate (HTPA). The polypeptide is 4-hydroxy-tetrahydrodipicolinate synthase (Helicobacter pylori (strain HPAG1)).